We begin with the raw amino-acid sequence, 1050 residues long: MAMGVSLTSHNNPLLRHLSPSSSWVSRSSSRLSSSPLPSFLFPCRRTLLQRKLASTDGNVGYCTTTVCQGFQHSVHQRSSSVVFNGEWELRSESNKVRMVPKIIKVGNQTEVAETHQVPGTVSAWREEANKLRERNGQIARNLDDNGYFNGSVPIISSAPSYETSQKIDYEFKPRGTTRSTTATLNKELIGITQSEPVVSLPRKGLDVGDNMDVNPKGEGIQRPLISDKSSGTANGNKNTVAISKVERSTEPSNVRENLGKIYDKVLIVDNVQAAKDTVAKLVNQFRNHVHSCDTEVSGIEVKEETPVDHGELICFSIYCGPEADFGNGKSCIWVDVLGENGREVLAEFKPYFEDSFIRKVWHNYSFDSHIIRNHGIEISGFHADTMHMARLWDSARRIKGGYSLEALTSDPKVLGGTQTKEEAEFLGKISMKTIFGKRKLKKDGSEGKIVVIPPVEELQREDREAWISYSALDAISTLKLYESMTKKLQLMDWHLDGKPVLGRTMLDFYHEFWRPFGELLVKMEAEGILVDREYLAEIEKVAKAEQQVAGSRFRNWASKYCPDAKYMNIGSDTQLRQLFFGGISNSHDEVLPVEKLFKVPNIDKVIEEGKKTPTKFRNIKLHRISDSPLSTENFTASGWPSVGGDVLKELAGKVSAEYDFMDDVSDISLEEVVEDDDVETSETQKSKTDDETDTSAYGTAYVAFGGGERGKEACHAIASLCEVCSIDSLISNFILPLQGSNVSGKDGRVHCSLNINTETGRLSARRPNLQNQPALEKDRYKIRKAFVASPGNTLVVADYGQLELRILAHLTGCKSMMEAFKAGGDFHSRTAMNMYPHVREAVENGQVILEWHPEPGEDKPPVPLLKDAFGSERRKAKMLNFSIAYGKTAVGLSRDWKVSTKEAQETVDLWYNDRQEVRKWQEMRKKEAIEDGYVLTLLGRSRRFPASKSRAQRNHIQRAAINTPVQGSAADVAMCAMLEISINQQLKKLGWRLLLQIHDEVILEGPIESAEIAKDIVVDCMSKPFNGRNILSVDLSVDAKCAQNWYAAK.

The transit peptide at 1-91 (MAMGVSLTSH…VVFNGEWELR (91 aa)) directs the protein to the chloroplast and mitochondrion. The segment at 202-240 (PRKGLDVGDNMDVNPKGEGIQRPLISDKSSGTANGNKNT) is disordered. The segment covering 228–240 (DKSSGTANGNKNT) has biased composition (polar residues). Residues 312 to 490 (ELICFSIYCG…LYESMTKKLQ (179 aa)) form the 3'-5' exonuclease domain. Residues 673–694 (VVEDDDVETSETQKSKTDDETD) form a disordered region. The polymerase stretch occupies residues 717–1048 (AIASLCEVCS…DAKCAQNWYA (332 aa)).

Belongs to the DNA polymerase type-A family. Expressed in shoot apical meristem.

Its subcellular location is the plastid. The protein localises to the chloroplast. The protein resides in the mitochondrion. It carries out the reaction DNA(n) + a 2'-deoxyribonucleoside 5'-triphosphate = DNA(n+1) + diphosphate. Not inhibited by aphidicolin. In terms of biological role, in addition to polymerase activity, this DNA polymerase exhibits 5'-3' exonuclease activity. Required for DNA replication and accumulation in plastids and mitochondria. May be required for DNA repair in both organelles. The polypeptide is DNA polymerase I A, chloroplastic/mitochondrial (POLIA) (Arabidopsis thaliana (Mouse-ear cress)).